We begin with the raw amino-acid sequence, 641 residues long: Anthrax toxin receptor-like (641 aa).

The first 27 residues, 1 to 27 (MMSHSPSMPCSALFLLLLLLLPPTFKG), serve as a signal peptide directing secretion. At 28-363 (GSLRYHGPGW…ASQGIVFKRT (336 aa)) the chain is on the extracellular side. The region spanning 76–247 (DLYLVLDKSG…SALEGVVDPL (172 aa)) is the VWFA domain. A divalent metal cation is bound by residues serine 84, serine 86, and threonine 150. The chain crosses the membrane as a helical span at residues 364 to 384 (WLMFLPVLLVTLLLLCCTWKL). The Cytoplasmic portion of the chain corresponds to 385–641 (CIKPKKLPPP…FPPISKGPKF (257 aa)). The disordered stretch occupies residues 391 to 455 (LPPPPPKPEK…ARPPPAPLPA (65 aa)). The span at 407–436 (PPPSSPPAPGRGPGPGPSAGPGPGPGPSPG) shows a compositional bias: pro residues.

Belongs to the ATR family.

It is found in the membrane. The chain is Anthrax toxin receptor-like (Antxrl) from Mus musculus (Mouse).